The chain runs to 108 residues: Large ribosomal subunit protein eL33A (108 aa).

Belongs to the eukaryotic ribosomal protein eL33 family. Component of the large ribosomal subunit (LSU). Mature yeast ribosomes consist of a small (40S) and a large (60S) subunit. The 40S small subunit contains 1 molecule of ribosomal RNA (18S rRNA) and at least 33 different proteins. The large 60S subunit contains 3 rRNA molecules (25S, 5.8S and 5S rRNA) and at least 46 different proteins.

The protein localises to the cytoplasm. Its subcellular location is the nucleus. It is found in the nucleolus. Its function is as follows. Component of the ribosome, a large ribonucleoprotein complex responsible for the synthesis of proteins in the cell. The small ribosomal subunit (SSU) binds messenger RNAs (mRNAs) and translates the encoded message by selecting cognate aminoacyl-transfer RNA (tRNA) molecules. The large subunit (LSU) contains the ribosomal catalytic site termed the peptidyl transferase center (PTC), which catalyzes the formation of peptide bonds, thereby polymerizing the amino acids delivered by tRNAs into a polypeptide chain. The nascent polypeptides leave the ribosome through a tunnel in the LSU and interact with protein factors that function in enzymatic processing, targeting, and the membrane insertion of nascent chains at the exit of the ribosomal tunnel. The protein is Large ribosomal subunit protein eL33A (rpl35b) of Schizosaccharomyces pombe (strain 972 / ATCC 24843) (Fission yeast).